Here is a 395-residue protein sequence, read N- to C-terminus: Chorismate synthase (395 aa).

Residues Arg40 and Arg46 each coordinate NADP(+). Residues 134-136, 256-257, Gly301, 316-320, and Arg342 each bind FMN; these read RAS, QA, and KPIST.

This sequence belongs to the chorismate synthase family. As to quaternary structure, homotetramer. FMNH2 serves as cofactor.

The catalysed reaction is 5-O-(1-carboxyvinyl)-3-phosphoshikimate = chorismate + phosphate. It participates in metabolic intermediate biosynthesis; chorismate biosynthesis; chorismate from D-erythrose 4-phosphate and phosphoenolpyruvate: step 7/7. In terms of biological role, catalyzes the anti-1,4-elimination of the C-3 phosphate and the C-6 proR hydrogen from 5-enolpyruvylshikimate-3-phosphate (EPSP) to yield chorismate, which is the branch point compound that serves as the starting substrate for the three terminal pathways of aromatic amino acid biosynthesis. This reaction introduces a second double bond into the aromatic ring system. This is Chorismate synthase from Beutenbergia cavernae (strain ATCC BAA-8 / DSM 12333 / CCUG 43141 / JCM 11478 / NBRC 16432 / NCIMB 13614 / HKI 0122).